The following is a 165-amino-acid chain: Cyclic pyranopterin monophosphate synthase (165 aa).

Substrate is bound by residues 76–78 (LCH) and 114–115 (ME). D129 is a catalytic residue.

Belongs to the MoaC family. In terms of assembly, homohexamer; trimer of dimers.

It catalyses the reaction (8S)-3',8-cyclo-7,8-dihydroguanosine 5'-triphosphate = cyclic pyranopterin phosphate + diphosphate. It participates in cofactor biosynthesis; molybdopterin biosynthesis. Functionally, catalyzes the conversion of (8S)-3',8-cyclo-7,8-dihydroguanosine 5'-triphosphate to cyclic pyranopterin monophosphate (cPMP). The polypeptide is Cyclic pyranopterin monophosphate synthase (Brucella melitensis biotype 2 (strain ATCC 23457)).